The following is a 449-amino-acid chain: NADH-quinone oxidoreductase subunit H (449 aa).

9 helical membrane passes run 23 to 43, 93 to 113, 137 to 157, 176 to 196, 209 to 229, 258 to 280, 300 to 320, 332 to 352, and 368 to 388; these read WWVI…LTLF, AVYL…FSVI, VAVL…VLGG, MISY…YAGS, LWYG…MVGE, ALFF…TLFL, YWPL…FIWL, FMAF…VAVA, and LLIG…IGGA. Positions 427 to 442 are enriched in polar residues; it reads RSSPIASSMPQPSAAT. The segment at 427 to 449 is disordered; that stretch reads RSSPIASSMPQPSAATRSAGEEI.

The protein belongs to the complex I subunit 1 family. As to quaternary structure, NDH-1 is composed of 14 different subunits. Subunits NuoA, H, J, K, L, M, N constitute the membrane sector of the complex.

The protein resides in the cell membrane. The enzyme catalyses a quinone + NADH + 5 H(+)(in) = a quinol + NAD(+) + 4 H(+)(out). In terms of biological role, NDH-1 shuttles electrons from NADH, via FMN and iron-sulfur (Fe-S) centers, to quinones in the respiratory chain. The immediate electron acceptor for the enzyme in this species is believed to be ubiquinone. Couples the redox reaction to proton translocation (for every two electrons transferred, four hydrogen ions are translocated across the cytoplasmic membrane), and thus conserves the redox energy in a proton gradient. This subunit may bind ubiquinone. The polypeptide is NADH-quinone oxidoreductase subunit H (Nocardioides sp. (strain ATCC BAA-499 / JS614)).